A 449-amino-acid polypeptide reads, in one-letter code: Protein cortex (449 aa).

WD repeat units follow at residues 108–148 (TYSY…ISQG), 149–188 (YAEY…KIDS), 198–237 (NRNC…ISWR), 283–327 (DSDW…VRDT), 345–382 (TGEL…DQWG), and 386–425 (SGLD…KKMK). Positions 386-397 (SGLDRVRTMVFS) match the D-box motif.

Belongs to the WD repeat CORT family.

It is found in the cytoplasm. Controls wing pigmentation patterning by regulating scale cell development, thereby playing a key role in mimicry and crypsis. Probably acts as an activator of the anaphase promoting complex/cyclosome (APC/C) that promotes the ubiquitin ligase activity and substrate specificity of the APC/C. This is Protein cortex from Heliconius erato (Crimson patched longwing butterfly).